Here is an 851-residue protein sequence, read N- to C-terminus: Venom phosphodiesterase (851 aa).

Positions 1–23 (MIQQKVLFISLVAVALGLGLGLG) are cleaved as a signal peptide. SMB domains are found at residues 30 to 73 (PQVS…VLPT) and 74 to 118 (QSWS…GETS). 16 disulfide bridges follow: Cys34-Cys38, Cys34-Cys51, Cys38-Cys69, Cys49-Cys51, Cys49-Cys62, Cys55-Cys61, Cys62-Cys69, Cys78-Cys83, Cys78-Cys95, Cys83-Cys113, Cys93-Cys95, Cys93-Cys106, Cys99-Cys105, Cys106-Cys113, Cys124-Cys170, and Cys132-Cys344. Residue Asn39 is glycosylated (N-linked (GlcNAc...) asparagine). The short motif at 58-60 (RQA) is the Cell attachment site element. Asp147 and Thr185 together coordinate a divalent metal cation. The active-site AMP-threonine intermediate is the Thr185. Asn216, Asn259, and Asn270 each carry an N-linked (GlcNAc...) asparagine glycan. Residue Lys271 participates in AMP binding. Residues Asp305, His309, Asp352, and His353 each coordinate a divalent metal cation. Residue His309 coordinates AMP. Disulfide bonds link Cys360–Cys457, Cys408–Cys793, Cys541–Cys599, Cys554–Cys654, Cys556–Cys639, and Cys762–Cys772. Residue Asn405 is glycosylated (N-linked (GlcNAc...) asparagine). His462 contacts a divalent metal cation. Residues Asn512, Asn594, and Asn745 are each glycosylated (N-linked (GlcNAc...) asparagine).

Belongs to the nucleotide pyrophosphatase/phosphodiesterase family. As to quaternary structure, monomer cleaved in two subunits; disulfide-linked. Is synthesized as a single-chain protein and is subsequently cleaved to form a two-subunit protein held together with disulfide bonds. The cofactor is a divalent metal cation. As to expression, expressed by venom gland.

The protein resides in the secreted. It catalyses the reaction ADP + H2O = AMP + phosphate + H(+). Hydrolyzes ADP with high activity. Shows weak or no activity on 5'-AMP, 5'-GMP, 3'-AMP, ATP, cAMP, and cGMP. Is devoid of monophosphatase and proteinase activities. Dose-dependently inhibits platelet aggregation induced by ADP (IC(50)=0.99 uM) and collagen (IC(50)=1.4 uM). This chain is Venom phosphodiesterase, found in Macrovipera lebetinus (Levantine viper).